The primary structure comprises 334 residues: MSLHLSNVILHQLSKNDQEELIVNYRAESLENDTASENLVAELHRVFNSKAGKGFGSFKSDSEFQQSLHEFRAGEQSFYDFSQKSALRLKDELSKYPFADEGTLVLAEYQSLATDYLFIGLLPSNQSLKVTEGLDISATDYLDISKMDIVARLDLSTYDTDKESNRYLTYIKGRVGRKVADFFLDFLQAEVGLDAKQQNQVLMQAVEDFVSDSKLEKEEAISYKKQVADYCNEQLKAGDEVQVRELSGELPASTDGTSFFDYTSEQGYELEDSFPADRATMRKLTKFVGAGGGLNVSFDSLLLGERIFYDPETDTLTIKGTPPNLRDQLTRNKS.

It belongs to the YejK family.

It localises to the cytoplasm. Its subcellular location is the nucleoid. The sequence is that of Nucleoid-associated protein VS_0951 from Vibrio atlanticus (strain LGP32) (Vibrio splendidus (strain Mel32)).